The chain runs to 281 residues: Polyamine aminopropyltransferase (281 aa).

The 236-residue stretch at 2-237 (EIWYTEKLEL…GIIGFTFLSN (236 aa)) folds into the PABS domain. Position 33 (Gln-33) interacts with S-methyl-5'-thioadenosine. Spermidine is bound by residues His-64 and Asp-88. S-methyl-5'-thioadenosine-binding positions include Glu-108 and 139-140 (DG). Asp-157 serves as the catalytic Proton acceptor. Position 157 to 160 (157 to 160 (DSSD)) interacts with spermidine. Pro-164 is a binding site for S-methyl-5'-thioadenosine.

It belongs to the spermidine/spermine synthase family. As to quaternary structure, homodimer or homotetramer.

The protein localises to the cytoplasm. It carries out the reaction S-adenosyl 3-(methylsulfanyl)propylamine + putrescine = S-methyl-5'-thioadenosine + spermidine + H(+). The protein operates within amine and polyamine biosynthesis; spermidine biosynthesis; spermidine from putrescine: step 1/1. Functionally, catalyzes the irreversible transfer of a propylamine group from the amino donor S-adenosylmethioninamine (decarboxy-AdoMet) to putrescine (1,4-diaminobutane) to yield spermidine. The protein is Polyamine aminopropyltransferase of Leptospira biflexa serovar Patoc (strain Patoc 1 / Ames).